The sequence spans 93 residues: Small ribosomal subunit protein uS19 (93 aa).

The protein belongs to the universal ribosomal protein uS19 family.

Protein S19 forms a complex with S13 that binds strongly to the 16S ribosomal RNA. In Salinispora tropica (strain ATCC BAA-916 / DSM 44818 / JCM 13857 / NBRC 105044 / CNB-440), this protein is Small ribosomal subunit protein uS19.